The sequence spans 421 residues: Putative B3 domain-containing protein Os08g0333500 (421 aa).

Residues 1–51 (MTVELEKIAGSFFISKGWKTFVHRTGLLSGQYIRFQVLTPSKINVLLFDKK) constitute a DNA-binding region (TF-B3). The interval 92 to 121 (SHTSNKETSSDSRTESMTDIPSSSDNSGET) is disordered. A compositionally biased stretch (basic and acidic residues) spans 95-107 (SNKETSSDSRTES). Positions 108-121 (MTDIPSSSDNSGET) are enriched in polar residues.

It localises to the nucleus. In Oryza sativa subsp. japonica (Rice), this protein is Putative B3 domain-containing protein Os08g0333500.